Reading from the N-terminus, the 441-residue chain is Proline--tRNA ligase (441 aa).

It belongs to the class-II aminoacyl-tRNA synthetase family. ProS type 2 subfamily. As to quaternary structure, homodimer.

The protein resides in the cytoplasm. The enzyme catalyses tRNA(Pro) + L-proline + ATP = L-prolyl-tRNA(Pro) + AMP + diphosphate. In terms of biological role, catalyzes the attachment of proline to tRNA(Pro) in a two-step reaction: proline is first activated by ATP to form Pro-AMP and then transferred to the acceptor end of tRNA(Pro). The polypeptide is Proline--tRNA ligase (Bartonella bacilliformis (strain ATCC 35685 / KC583 / Herrer 020/F12,63)).